The primary structure comprises 314 residues: UDP-3-O-acyl-N-acetylglucosamine deacetylase (314 aa).

Zn(2+) is bound by residues His-82, His-239, and Asp-243. His-266 functions as the Proton donor in the catalytic mechanism.

Belongs to the LpxC family. Zn(2+) serves as cofactor.

The catalysed reaction is a UDP-3-O-[(3R)-3-hydroxyacyl]-N-acetyl-alpha-D-glucosamine + H2O = a UDP-3-O-[(3R)-3-hydroxyacyl]-alpha-D-glucosamine + acetate. Its pathway is glycolipid biosynthesis; lipid IV(A) biosynthesis; lipid IV(A) from (3R)-3-hydroxytetradecanoyl-[acyl-carrier-protein] and UDP-N-acetyl-alpha-D-glucosamine: step 2/6. In terms of biological role, catalyzes the hydrolysis of UDP-3-O-myristoyl-N-acetylglucosamine to form UDP-3-O-myristoylglucosamine and acetate, the committed step in lipid A biosynthesis. This chain is UDP-3-O-acyl-N-acetylglucosamine deacetylase, found in Myxococcus xanthus (strain DK1622).